The chain runs to 103 residues: Large ribosomal subunit protein bL21 (103 aa).

It belongs to the bacterial ribosomal protein bL21 family. In terms of assembly, part of the 50S ribosomal subunit. Contacts protein L20.

In terms of biological role, this protein binds to 23S rRNA in the presence of protein L20. The sequence is that of Large ribosomal subunit protein bL21 from Alcanivorax borkumensis (strain ATCC 700651 / DSM 11573 / NCIMB 13689 / SK2).